The following is a 44-amino-acid chain: PVSRQQCSQRIQGERFNQCRSQMQDGQLQSCCQELQNVEEQCQC.

Intrachain disulfides connect cysteine 7-cysteine 42 and cysteine 19-cysteine 31.

The protein belongs to the 2S seed storage albumins family. As to quaternary structure, the mature protein consists of a small and a large chain linked by 2 disulfide bonds.

Its function is as follows. This is a 2S seed storage protein. Has antifungal activity. Inhibits spore germination in H.sativum (IC(50)=62.5 ug/ml) and P.betae (IC(50)=62.5 ug/ml). Inhibits growth of H.sativum, V.albo-atrum and P.infestans. This Taraxacum officinale (Common dandelion) protein is 2S seed storage albumin protein.